We begin with the raw amino-acid sequence, 430 residues long: Adenylosuccinate synthetase (430 aa).

GTP is bound by residues 13–19 and 41–43; these read GDEGKGK and GHT. Residue Asp-14 is the Proton acceptor of the active site. 2 residues coordinate Mg(2+): Asp-14 and Gly-41. Residues 14-17, 39-42, Thr-130, Arg-144, Gln-225, Thr-240, and Arg-304 each bind IMP; these read DEGK and NAGH. The active-site Proton donor is His-42. Substrate is bound at residue 300-306; sequence ASTGRPR. Residues Arg-306, 332–334, and 414–416 contribute to the GTP site; these read KLD and STG.

The protein belongs to the adenylosuccinate synthetase family. Homodimer. Requires Mg(2+) as cofactor.

The protein resides in the cytoplasm. The enzyme catalyses IMP + L-aspartate + GTP = N(6)-(1,2-dicarboxyethyl)-AMP + GDP + phosphate + 2 H(+). It participates in purine metabolism; AMP biosynthesis via de novo pathway; AMP from IMP: step 1/2. Its function is as follows. Plays an important role in the de novo pathway of purine nucleotide biosynthesis. Catalyzes the first committed step in the biosynthesis of AMP from IMP. The protein is Adenylosuccinate synthetase of Xanthomonas campestris pv. campestris (strain 8004).